A 279-amino-acid chain; its full sequence is Early nodulin-like protein 18 (279 aa).

A signal peptide spans 1 to 24 (MAGAVATVSVGLAWLGLMAAAASA). A Phytocyanin domain is found at 25-133 (TQFRVGGGRG…GEKLVVVVMA (109 aa)). Cysteines 82 and 121 form a disulfide. N-linked (GlcNAc...) asparagine glycosylation is present at N83. The interval 138–256 (RHAPPPSPPA…ANDRSGAAAA (119 aa)) is disordered. Residues 140-168 (APPPSPPAVPPPVAPVPMPSPASSPPSPA) show a composition bias toward pro residues. Positions 169–185 (PAAATPSLAPSPVATTP) are enriched in low complexity. The span at 186-199 (SPSPSVSPMAPAPA) shows a compositional bias: pro residues. 2 stretches are compositionally biased toward low complexity: residues 212 to 226 (AAMAPSPSTTPGGVA) and 234 to 256 (TDGANATTPAAPAANDRSGAAAA). N238 carries an N-linked (GlcNAc...) asparagine glycan. A lipid anchor (GPI-anchor amidated serine) is attached at S251. The propeptide at 252-279 (GAAAAAPVVAGVVVTSLGAYIGYAMLAI) is removed in mature form.

Belongs to the early nodulin-like (ENODL) family. In terms of tissue distribution, specifically expressed in reproductive tissues. Mainly observed in developing seeds and in mature leaves.

The protein localises to the cell membrane. Its function is as follows. May act as a carbohydrate transporter. Promotes tolerance to salt stress in a redox-dependent manner. This Oryza sativa subsp. japonica (Rice) protein is Early nodulin-like protein 18.